Consider the following 813-residue polypeptide: Calpain-7 (813 aa).

Methionine 1 is modified (N-acetylmethionine). A Phosphothreonine modification is found at threonine 95. Positions 232 to 540 (RERFAYPMPF…YDVIYLSWNP (309 aa)) constitute a Calpain catalytic domain. Active-site residues include cysteine 290, histidine 458, and asparagine 478. The domain III stretch occupies residues 541–701 (GLFKESTCIH…INGKWSGQSA (161 aa)). Positions 702-813 (GGCGNFQETH…IIPIKITQLQ (112 aa)) are domain N.

It belongs to the peptidase C2 family. In terms of tissue distribution, ubiquitous.

The protein resides in the nucleus. Calcium-regulated non-lysosomal thiol-protease. This Homo sapiens (Human) protein is Calpain-7 (CAPN7).